Here is a 117-residue protein sequence, read N- to C-terminus: Large ribosomal subunit protein uL24 (117 aa).

The protein belongs to the universal ribosomal protein uL24 family. Part of the 50S ribosomal subunit.

In terms of biological role, one of two assembly initiator proteins, it binds directly to the 5'-end of the 23S rRNA, where it nucleates assembly of the 50S subunit. Functionally, one of the proteins that surrounds the polypeptide exit tunnel on the outside of the subunit. The protein is Large ribosomal subunit protein uL24 of Trichormus variabilis (strain ATCC 29413 / PCC 7937) (Anabaena variabilis).